The following is a 394-amino-acid chain: Obg-like ATPase 1 (394 aa).

The OBG-type G domain maps to 25-282; the sequence is LKIGIVGLPN…MPPDEAAKYC (258 aa). ATP contacts are provided by residues 34–39, 56–60, and 94–97; these read NVGKST, FCTID, and DIAG. Ser-38 and Thr-58 together coordinate Mg(2+). Phe-129 is a GTP binding site. ATP is bound by residues 230 to 231, Met-231, and 263 to 265; these read NM and SCA. A GTP-binding site is contributed by 263-265; the sequence is SCA. The region spanning 303–386 is the TGS domain; sequence HLIYFFTAGP…QDADIIFFKF (84 aa).

It belongs to the TRAFAC class OBG-HflX-like GTPase superfamily. OBG GTPase family. YchF/OLA1 subfamily. Monomer (Potential). Interacts with GAP1. Mg(2+) is required as a cofactor.

Its subcellular location is the cytoplasm. The protein resides in the cell membrane. It localises to the cytosol. With respect to regulation, activated by GAP1. Its function is as follows. Hydrolyzes ATP, and can also hydrolyze GTP with lower efficiency. Has lower affinity for GTP (Potential). Exhibits GTPase activity. Exhibits similar binding affinities and hydrolytic activities toward both GTP and ATP. Binds to the 26 S ribosomal RNA in vitro, but not to the 5.8 S or 18 S rRNA. Confers sensitivity to salinity stress by suppressing the anti-oxidation enzymatic activities and increasing lipid peroxidation thus leading to the accumulation of reactive oxygen species (ROS). In Oryza sativa subsp. indica (Rice), this protein is Obg-like ATPase 1.